The sequence spans 386 residues: Phosphoglycerate kinase (386 aa).

Substrate is bound by residues 21–23, R36, 59–62, R113, and R146; these read DLN and HLGR. ATP-binding positions include K197, E314, and 340–343; that span reads GGDT.

It belongs to the phosphoglycerate kinase family. Monomer.

Its subcellular location is the cytoplasm. The catalysed reaction is (2R)-3-phosphoglycerate + ATP = (2R)-3-phospho-glyceroyl phosphate + ADP. It participates in carbohydrate degradation; glycolysis; pyruvate from D-glyceraldehyde 3-phosphate: step 2/5. The chain is Phosphoglycerate kinase from Vibrio campbellii (strain ATCC BAA-1116).